A 515-amino-acid polypeptide reads, in one-letter code: Cytoplasmic dynein 1 light intermediate chain 1 (515 aa).

Residues 1-24 are compositionally biased toward low complexity; that stretch reads MAAVGRAGSFGSSSASGAANNASA. Residues 1–34 form a disordered region; it reads MAAVGRAGSFGSSSASGAANNASAELRAGGEEDD. Residue 64–71 coordinates ATP; sequence GEDGAGKT. Disordered regions lie at residues 370–424 and 445–515; these read QSQL…DPNM and KTGS…GEAS. Polar residues predominate over residues 397 to 409; the sequence is RTPNRSVTSNVAS. Residues 448–468 show a composition bias toward gly residues; sequence SPGGPGGVGGSPGGGSAGGTG. Positions 490–499 are enriched in basic and acidic residues; that stretch reads ELDRISRKPE. Over residues 502 to 515 the composition is skewed to polar residues; it reads SPTSPTSPTEGEAS.

This sequence belongs to the dynein light intermediate chain family. Homodimer. The cytoplasmic dynein 1 complex consists of two catalytic heavy chains (HCs) and a number of non-catalytic subunits presented by intermediate chains (ICs). Post-translationally, phosphorylated.

It is found in the cytoplasm. Its subcellular location is the cytoskeleton. The protein resides in the chromosome. The protein localises to the centromere. It localises to the kinetochore. It is found in the spindle pole. Its subcellular location is the recycling endosome membrane. In terms of biological role, acts as one of several non-catalytic accessory components of the cytoplasmic dynein 1 complex that are thought to be involved in linking dynein to cargos and to adapter proteins that regulate dynein function. Cytoplasmic dynein 1 acts as a motor for the intracellular retrograde motility of vesicles and organelles along microtubules. May play a role in binding dynein to membranous organelles or chromosomes. May regulate the movement of peripheral sorting endosomes along microtubule tracks toward the microtubule organizing center/centrosome, generating the endosomal recycling compartment. This is Cytoplasmic dynein 1 light intermediate chain 1 (DYNC1LI1) from Gallus gallus (Chicken).